A 459-amino-acid polypeptide reads, in one-letter code: Glutamate--tRNA ligase 2 (459 aa).

Positions Pro8 to Gly18 match the 'HIGH' region motif. Residues Lys237–Arg241 carry the 'KMSKS' region motif. Residue Lys240 participates in ATP binding.

The protein belongs to the class-I aminoacyl-tRNA synthetase family. Glutamate--tRNA ligase type 1 subfamily. Monomer.

The protein resides in the cytoplasm. The enzyme catalyses tRNA(Glu) + L-glutamate + ATP = L-glutamyl-tRNA(Glu) + AMP + diphosphate. Its function is as follows. Catalyzes the attachment of glutamate to tRNA(Glu) in a two-step reaction: glutamate is first activated by ATP to form Glu-AMP and then transferred to the acceptor end of tRNA(Glu). This is Glutamate--tRNA ligase 2 from Campylobacter curvus (strain 525.92).